Consider the following 326-residue polypeptide: Glyoxylate/hydroxypyruvate reductase B (326 aa).

Residues Arg237 and Glu266 contribute to the active site. The active-site Proton donor is His285.

The protein belongs to the D-isomer specific 2-hydroxyacid dehydrogenase family. GhrB subfamily. As to quaternary structure, homodimer.

The protein resides in the cytoplasm. It carries out the reaction glycolate + NADP(+) = glyoxylate + NADPH + H(+). The catalysed reaction is (R)-glycerate + NAD(+) = 3-hydroxypyruvate + NADH + H(+). It catalyses the reaction (R)-glycerate + NADP(+) = 3-hydroxypyruvate + NADPH + H(+). Its function is as follows. Catalyzes the NADPH-dependent reduction of glyoxylate and hydroxypyruvate into glycolate and glycerate, respectively. The sequence is that of Glyoxylate/hydroxypyruvate reductase B from Yersinia enterocolitica serotype O:8 / biotype 1B (strain NCTC 13174 / 8081).